We begin with the raw amino-acid sequence, 578 residues long: ER degradation-enhancing alpha-mannosidase-like protein 2 (578 aa).

Positions 1-21 (MPFRLLIPLGLLCALLPQHHG) are cleaved as a signal peptide. N-linked (GlcNAc...) asparagine glycans are attached at residues Asn-90, Asn-112, Asn-289, and Asn-450. The tract at residues 517-557 (KNTVSSGPWEPPARPGTLFSPENHDQARERKPAKQKVPLLS) is disordered. Residues 538 to 548 (ENHDQARERKP) are compositionally biased toward basic and acidic residues.

This sequence belongs to the glycosyl hydrolase 47 family. Post-translationally, N-glycosylated. In terms of tissue distribution, expressed ubiquitously in all tissues tested with slightly higher levels detected in small intestine and peripheral blood leukocytes and weakest levels in brain and skeletal muscle.

The protein resides in the endoplasmic reticulum lumen. In terms of biological role, involved in the endoplasmic reticulum-associated degradation (ERAD) pathway that targets misfolded glycoproteins for degradation in an N-glycan-dependent manner. May initiate ERAD by promoting the first mannose trimming step of ERAD substrates, from Man9GlcNAc2 to Man8GlcNAc2. Seems to recognize and bind to exposed hydrophobic regions in target proteins. This chain is ER degradation-enhancing alpha-mannosidase-like protein 2 (EDEM2), found in Homo sapiens (Human).